Here is a 549-residue protein sequence, read N- to C-terminus: Glucose-6-phosphate isomerase (549 aa).

Catalysis depends on Glu-353, which acts as the Proton donor. Catalysis depends on residues His-384 and Lys-510. Positions 523 to 549 are disordered; that stretch reads AEPPAAQSDSSTDALVRRYRSERGRTA. Residues 537-549 are compositionally biased toward basic and acidic residues; the sequence is LVRRYRSERGRTA.

Belongs to the GPI family.

Its subcellular location is the cytoplasm. The catalysed reaction is alpha-D-glucose 6-phosphate = beta-D-fructose 6-phosphate. It functions in the pathway carbohydrate biosynthesis; gluconeogenesis. The protein operates within carbohydrate degradation; glycolysis; D-glyceraldehyde 3-phosphate and glycerone phosphate from D-glucose: step 2/4. In terms of biological role, catalyzes the reversible isomerization of glucose-6-phosphate to fructose-6-phosphate. This chain is Glucose-6-phosphate isomerase, found in Mycolicibacterium gilvum (strain PYR-GCK) (Mycobacterium gilvum (strain PYR-GCK)).